Here is a 563-residue protein sequence, read N- to C-terminus: Arginine--tRNA ligase (563 aa).

Positions 121–131 (PNIAKPFSIGH) match the 'HIGH' region motif.

Belongs to the class-I aminoacyl-tRNA synthetase family. Monomer.

It localises to the cytoplasm. It catalyses the reaction tRNA(Arg) + L-arginine + ATP = L-arginyl-tRNA(Arg) + AMP + diphosphate. This Streptococcus pneumoniae (strain Taiwan19F-14) protein is Arginine--tRNA ligase.